A 486-amino-acid polypeptide reads, in one-letter code: Deleted in azoospermia protein 3 (486 aa).

The span at 1–10 shows a compositional bias: polar residues; the sequence is MSAANPETPN. The tract at residues 1–27 is disordered; sequence MSAANPETPNSTISREASTQSSSAAAS. The span at 11–27 shows a compositional bias: low complexity; it reads STISREASTQSSSAAAS. An RRM domain is found at 40–115; that stretch reads NTVFVGGIDA…KKLKLGPAIR (76 aa). 12 DAZ domains span residues 167 to 190, 191 to 214, 215 to 238, 239 to 262, 263 to 286, 287 to 310, 311 to 334, 335 to 358, 359 to 382, 383 to 406, 407 to 430, and 431 to 454; these read AYSA…YNYQ, EYPT…YNYQ, PFPA…YNYQ, and AFPA…YNYQ.

The protein belongs to the RRM DAZ family. As to quaternary structure, forms a heterodimer with BOLL and DAZL. Interacts with PUM2, DAZAP1, DAZAP2, DZIP1 and DZIP3. Testis specific.

It is found in the cytoplasm. It localises to the nucleus. RNA-binding protein that plays an essential role in spermatogenesis. May act by binding to the 3'-UTR of mRNAs and regulating their translation. The chain is Deleted in azoospermia protein 3 (DAZ3) from Homo sapiens (Human).